The following is a 418-amino-acid chain: Transmembrane protease serine 11D (418 aa).

Topologically, residues 1–20 are cytoplasmic; the sequence is MYRPARVTSTSRFLNPYVVC. A helical; Signal-anchor for type II membrane protein membrane pass occupies residues 21 to 41; that stretch reads FIVVAGVVILAVTIALLVYFL. Topologically, residues 42 to 418 are extracellular; sequence AFDQKSYFYR…LDWIRQQTGI (377 aa). In terms of domain architecture, SEA spans 46–163; it reads KSYFYRSSFQ…STEITSLTDQ (118 aa). An N-linked (GlcNAc...) asparagine glycan is attached at N144. Cystine bridges form between C173–C292, C212–C228, C337–C353, and C364–C393. The region spanning 187–417 is the Peptidase S1 domain; sequence ILGGTEAEEG…YLDWIRQQTG (231 aa). Active-site charge relay system residues include H227 and D272. S368 serves as the catalytic Charge relay system.

The protein belongs to the peptidase S1 family. In terms of assembly, monomer. Located in the cells of the submucosal serous glands of the bronchi and trachea.

The protein localises to the cell membrane. Its subcellular location is the secreted. Strongly inhibited by diisopropyl fluorophosphate, leupeptin, antipain, aprotinin, and soybean trypsin inhibitor, but hardly inhibited by secretory leukocyte protease inhibitor at 10 microM. In terms of biological role, may play some biological role in the host defense system on the mucous membrane independently of or in cooperation with other substances in airway mucous or bronchial secretions. Plays a role in the proteolytic processing of ACE2. Proteolytically cleaves and activates the human coronavirus 229E (HCoV-229E) spike glycoprotein which facilitate virus-cell membrane fusions; spike proteins are synthesized and maintained in precursor intermediate folding states and proteolysis permits the refolding and energy release required to create stable virus-cell linkages and membrane coalescence. Preferentially cleaves the C-terminal side of arginine residues at the P1 position of certain peptides, cleaving Boc-Phe-Ser-Arg-4-methylcoumaryl-7-amide most efficiently and having an optimum pH of 8.6 with this substrate. The sequence is that of Transmembrane protease serine 11D (TMPRSS11D) from Homo sapiens (Human).